The following is a 200-amino-acid chain: NADH-quinone oxidoreductase subunit C (200 aa).

It belongs to the complex I 30 kDa subunit family. As to quaternary structure, NDH-1 is composed of 14 different subunits. Subunits NuoB, C, D, E, F, and G constitute the peripheral sector of the complex.

It is found in the cell inner membrane. The catalysed reaction is a quinone + NADH + 5 H(+)(in) = a quinol + NAD(+) + 4 H(+)(out). Functionally, NDH-1 shuttles electrons from NADH, via FMN and iron-sulfur (Fe-S) centers, to quinones in the respiratory chain. The immediate electron acceptor for the enzyme in this species is believed to be ubiquinone. Couples the redox reaction to proton translocation (for every two electrons transferred, four hydrogen ions are translocated across the cytoplasmic membrane), and thus conserves the redox energy in a proton gradient. The polypeptide is NADH-quinone oxidoreductase subunit C (Rhizobium johnstonii (strain DSM 114642 / LMG 32736 / 3841) (Rhizobium leguminosarum bv. viciae)).